Here is a 273-residue protein sequence, read N- to C-terminus: Dermonecrotic toxin LspiSicTox-betaIE1i (273 aa).

Residues Glu25 and Asp27 each coordinate Mg(2+). Residue His41 is the Nucleophile of the active site. A disulfide bridge links Cys45 with Cys51. Asp85 lines the Mg(2+) pocket.

Belongs to the arthropod phospholipase D family. Class I subfamily. Mg(2+) is required as a cofactor. In terms of tissue distribution, expressed by the venom gland.

It localises to the secreted. It carries out the reaction an N-(acyl)-sphingosylphosphocholine = an N-(acyl)-sphingosyl-1,3-cyclic phosphate + choline. The catalysed reaction is an N-(acyl)-sphingosylphosphoethanolamine = an N-(acyl)-sphingosyl-1,3-cyclic phosphate + ethanolamine. The enzyme catalyses a 1-acyl-sn-glycero-3-phosphocholine = a 1-acyl-sn-glycero-2,3-cyclic phosphate + choline. It catalyses the reaction a 1-acyl-sn-glycero-3-phosphoethanolamine = a 1-acyl-sn-glycero-2,3-cyclic phosphate + ethanolamine. Dermonecrotic toxins cleave the phosphodiester linkage between the phosphate and headgroup of certain phospholipids (sphingolipid and lysolipid substrates), forming an alcohol (often choline) and a cyclic phosphate. This toxin acts on sphingomyelin (SM). It may also act on ceramide phosphoethanolamine (CPE), lysophosphatidylcholine (LPC) and lysophosphatidylethanolamine (LPE), but not on lysophosphatidylserine (LPS), and lysophosphatidylglycerol (LPG). It acts by transphosphatidylation, releasing exclusively cyclic phosphate products as second products. Induces dermonecrosis, hemolysis, increased vascular permeability, edema, inflammatory response, and platelet aggregation. The chain is Dermonecrotic toxin LspiSicTox-betaIE1i from Loxosceles spinulosa (Recluse spider).